A 557-amino-acid chain; its full sequence is Phosphoacetylglucosamine mutase (557 aa).

Ser67 serves as the catalytic Phosphoserine intermediate. Residues Ser67, Asp298, Asp300, and Asp302 each contribute to the Mg(2+) site. Position 67 is a phosphoserine (Ser67). Residues 395–397 (EAN), 522–526 (RASGT), and Arg531 each bind substrate.

This sequence belongs to the phosphohexose mutase family. Requires Mg(2+) as cofactor.

Its subcellular location is the cytoplasm. It localises to the nucleus. The enzyme catalyses N-acetyl-alpha-D-glucosamine 1-phosphate = N-acetyl-D-glucosamine 6-phosphate. Its pathway is nucleotide-sugar biosynthesis; UDP-N-acetyl-alpha-D-glucosamine biosynthesis; N-acetyl-alpha-D-glucosamine 1-phosphate from alpha-D-glucosamine 6-phosphate (route I): step 2/2. Catalyzes the conversion of GlcNAc-6-P into GlcNAc-1-P during the synthesis of uridine diphosphate/UDP-GlcNAc, which is a biosynthetic precursor of chitin and also supplies the amino sugars for N-linked oligosaccharides of glycoproteins. Also has phosphoglucomutase activity. This chain is Phosphoacetylglucosamine mutase, found in Saccharomyces cerevisiae (strain ATCC 204508 / S288c) (Baker's yeast).